The sequence spans 977 residues: Myb-like protein I (977 aa).

Residues 1–122 (MMNNQSMVRY…QQQQQQLDKS (122 aa)) form a disordered region. Positions 21 to 39 (PSPPVYSPIYRSPPPPPQP) are enriched in pro residues. Residues 52–68 (DNSHHQVMDNSDHEQQQ) are compositionally biased toward basic and acidic residues. The segment covering 75–118 (QQQQQQQHHHQQQQQQQHHQQQQQQHHQQQQQHHHQQQQQQQQQ) has biased composition (low complexity). An HTH myb-type domain is found at 167–222 (EKKKQSRYWTPEEHSRFIEALSKYGHKDVKSISQYVSTRNPTQVRTHAQKYFLRID). Positions 195–218 (VKSISQYVSTRNPTQVRTHAQKYF) form a DNA-binding region, H-T-H motif. Disordered regions lie at residues 229–331 (LESK…SSPL), 422–516 (INNN…SSQP), 531–650 (NNNN…QQQM), 738–853 (LNSN…WPGP), and 872–960 (NYVP…GMNQ). The span at 241 to 252 (KDDDWLREEYND) shows a compositional bias: acidic residues. The segment covering 254 to 275 (GSPTQYSSCSNSPTTNSVANPF) has biased composition (polar residues). Composition is skewed to low complexity over residues 276 to 329 (SNSL…GNSS) and 422 to 504 (INNN…INNN). A compositionally biased stretch (polar residues) spans 505–516 (GPNSPNLLSSQP). Low complexity predominate over residues 738-754 (LNSNSGNSSPNISSING). The span at 783 to 797 (LSGSPSHSPAQSPHY) shows a compositional bias: polar residues. Composition is skewed to low complexity over residues 798-848 (NLNN…SHSI) and 887-943 (SPHF…GSGS). Residues 944 to 960 (WHQYQATDSPTGWGMNQ) are compositionally biased toward polar residues.

The protein localises to the nucleus. The protein is Myb-like protein I (mybI) of Dictyostelium discoideum (Social amoeba).